A 387-amino-acid chain; its full sequence is Phosphoglycerate kinase (387 aa).

Substrate is bound by residues 21-23, arginine 36, 59-62, arginine 113, and arginine 146; these read DLN and HLGR. Residues lysine 197, glutamate 314, and 340-343 each bind ATP; that span reads GGDT.

The protein belongs to the phosphoglycerate kinase family. As to quaternary structure, monomer.

The protein localises to the cytoplasm. The catalysed reaction is (2R)-3-phosphoglycerate + ATP = (2R)-3-phospho-glyceroyl phosphate + ADP. Its pathway is carbohydrate degradation; glycolysis; pyruvate from D-glyceraldehyde 3-phosphate: step 2/5. The chain is Phosphoglycerate kinase from Alcanivorax borkumensis (strain ATCC 700651 / DSM 11573 / NCIMB 13689 / SK2).